A 475-amino-acid chain; its full sequence is Ribulose bisphosphate carboxylase large chain (475 aa).

Positions 1–2 (MV) are excised as a propeptide. Proline 3 carries the post-translational modification N-acetylproline. The residue at position 14 (lysine 14) is an N6,N6,N6-trimethyllysine. Substrate-binding residues include asparagine 123 and threonine 173. Residue lysine 175 is the Proton acceptor of the active site. Lysine 177 is a substrate binding site. Positions 201, 203, and 204 each coordinate Mg(2+). Position 201 is an N6-carboxylysine (lysine 201). Residue histidine 294 is the Proton acceptor of the active site. Substrate is bound by residues arginine 295, histidine 327, and serine 379.

Belongs to the RuBisCO large chain family. Type I subfamily. As to quaternary structure, heterohexadecamer of 8 large chains and 8 small chains. Requires Mg(2+) as cofactor.

It localises to the plastid. The protein localises to the chloroplast. It carries out the reaction 2 (2R)-3-phosphoglycerate + 2 H(+) = D-ribulose 1,5-bisphosphate + CO2 + H2O. The catalysed reaction is D-ribulose 1,5-bisphosphate + O2 = 2-phosphoglycolate + (2R)-3-phosphoglycerate + 2 H(+). Its function is as follows. RuBisCO catalyzes two reactions: the carboxylation of D-ribulose 1,5-bisphosphate, the primary event in carbon dioxide fixation, as well as the oxidative fragmentation of the pentose substrate in the photorespiration process. Both reactions occur simultaneously and in competition at the same active site. In Chlamydomonas moewusii (Chlamydomonas eugametos), this protein is Ribulose bisphosphate carboxylase large chain.